Reading from the N-terminus, the 484-residue chain is Packaging protein UL32 homolog (484 aa).

Residues C74, C77, H148, C154, C286, C289, H383, and C390 each contribute to the Zn(2+) site. Zinc finger regions lie at residues 74–154 and 286–390; these read CNIC…IHRC and CLLC…DPLC.

The protein belongs to the herpesviridae UL32 protein family.

It is found in the host cytoplasm. The protein localises to the host nucleus. Functionally, plays a role in efficient localization of neo-synthesized capsids to nuclear replication compartments, thereby controlling cleavage and packaging of virus genomic DNA. This chain is Packaging protein UL32 homolog (U36), found in Homo sapiens (Human).